The primary structure comprises 399 residues: Calsequestrin-2 (399 aa).

An N-terminal signal peptide occupies residues 1 to 19 (MKRTHLFIVGIYFLSSCRA). Tyr282 is subject to Phosphotyrosine. Residue Asn335 is glycosylated (N-linked (GlcNAc...) asparagine). Positions 365–399 (VLSGKINTEDDDEDDDDDDNSDEEDNDDSDDDDDE) are disordered. Over residues 373–399 (EDDDEDDDDDDNSDEEDNDDSDDDDDE) the composition is skewed to acidic residues. 2 positions are modified to phosphoserine: Ser385 and Ser393.

Belongs to the calsequestrin family. Monomer, homodimer and homooligomer. Mostly monomeric in the absence of calcium. Forms higher oligomers in a calcium-dependent manner. Dimers associate to form tetramers, that then form linear homomer chains. Interacts with ASPH and TRDN. In terms of processing, phosphorylation in the C-terminus, probably by CK2, moderately increases calcium buffering capacity. N-glycosylated.

It is found in the sarcoplasmic reticulum lumen. Functionally, calsequestrin is a high-capacity, moderate affinity, calcium-binding protein and thus acts as an internal calcium store in muscle. Calcium ions are bound by clusters of acidic residues at the protein surface, especially at the interface between subunits. Can bind around 60 Ca(2+) ions. Regulates the release of lumenal Ca(2+) via the calcium release channel RYR2; this plays an important role in triggering muscle contraction. Plays a role in excitation-contraction coupling in the heart and in regulating the rate of heart beats. In Homo sapiens (Human), this protein is Calsequestrin-2 (CASQ2).